A 72-amino-acid chain; its full sequence is ATP synthase subunit c (72 aa).

2 consecutive transmembrane segments (helical) span residues 1–21 (MSLGVIAAAIAIGLSALGAGI) and 49–69 (FIGVALVEALPIIGVVIAFIV).

Belongs to the ATPase C chain family. F-type ATPases have 2 components, F(1) - the catalytic core - and F(0) - the membrane proton channel. F(1) has five subunits: alpha(3), beta(3), gamma(1), delta(1), epsilon(1). F(0) has three main subunits: a(1), b(2) and c(10-14). The alpha and beta chains form an alternating ring which encloses part of the gamma chain. F(1) is attached to F(0) by a central stalk formed by the gamma and epsilon chains, while a peripheral stalk is formed by the delta and b chains.

It localises to the cell membrane. In terms of biological role, f(1)F(0) ATP synthase produces ATP from ADP in the presence of a proton or sodium gradient. F-type ATPases consist of two structural domains, F(1) containing the extramembraneous catalytic core and F(0) containing the membrane proton channel, linked together by a central stalk and a peripheral stalk. During catalysis, ATP synthesis in the catalytic domain of F(1) is coupled via a rotary mechanism of the central stalk subunits to proton translocation. Its function is as follows. Key component of the F(0) channel; it plays a direct role in translocation across the membrane. A homomeric c-ring of between 10-14 subunits forms the central stalk rotor element with the F(1) delta and epsilon subunits. The chain is ATP synthase subunit c from Bacillus cytotoxicus (strain DSM 22905 / CIP 110041 / 391-98 / NVH 391-98).